The chain runs to 464 residues: MTGRVTSVRGPVLDIRVEGPLPAIGDVVEVGSLPVVAEIQAHLGAADVRAIALHSTQGIARGETVRTTGGPLRVPTGPAVLGRLLDVAGRPADLGPPIPAEAPRAPILHPAPPLAAQDARFQVFSTGIKVLDLLAPLAQGGKTAMFGGAGVGKTVLVMELIRAMVSGYDGISVFAGVGERSREGHEMLGEMKASGVLDRTVLVYGQMNEPPGARWRVPLTALTIAEGFRDGEGRNVLLLIDNVFRFVQAGAEVSGLLGRMPSRVGYQPTLETEVAALQERIASVGRASVTAIEAVYVPADDFTDPAVTAISAHVDSTVVLSRQLAAEGIYPAIDPLATTSVLLDPAVVGEEHARVAGRLKEAIEHYHELRDVIALLGIEELGREEQLMVGRARKLQRFLTQPFFVAAAYTGMEGRSVPVAETVQGCAAILAGECDDWDEGSLYMIGTLAEARAREEARRRKGAA.

147–154 (GGAGVGKT) serves as a coordination point for ATP.

Belongs to the ATPase alpha/beta chains family. F-type ATPases have 2 components, CF(1) - the catalytic core - and CF(0) - the membrane proton channel. CF(1) has five subunits: alpha(3), beta(3), gamma(1), delta(1), epsilon(1). CF(0) has four main subunits: a(1), b(1), b'(1) and c(9-12).

Its subcellular location is the cell inner membrane. It catalyses the reaction ATP + H2O + 4 H(+)(in) = ADP + phosphate + 5 H(+)(out). Functionally, produces ATP from ADP in the presence of a proton gradient across the membrane. The catalytic sites are hosted primarily by the beta subunits. The chain is ATP synthase subunit beta 2 from Cereibacter sphaeroides (strain ATCC 17029 / ATH 2.4.9) (Rhodobacter sphaeroides).